Reading from the N-terminus, the 456-residue chain is Protein COBRA (456 aa).

The first 36 residues, 1 to 36, serve as a signal peptide directing secretion; that stretch reads MESFFSRSTSIVSKLSFLALWIVFLISSSSFTSTEA. N-linked (GlcNAc...) asparagine glycans are attached at residues asparagine 45, asparagine 170, asparagine 178, asparagine 217, asparagine 242, asparagine 258, asparagine 328, asparagine 343, and asparagine 362. The GPI-anchor amidated asparagine moiety is linked to residue asparagine 431. Positions 432 to 456 are cleaved as a propeptide — removed in mature form; it reads GGSRSQFSFVAAVLLPLLVFFFFSA.

Belongs to the COBRA family. Expressed in roots, stems, leaves, flowers and siliques. Up-regulated in the root zone of rapid longitudinal expansion.

Its subcellular location is the lateral cell membrane. Functionally, involved in determining the orientation of cell expansion, probably by playing an important role in cellulose deposition. May act by recruiting cellulose synthesizing complexes to discrete positions on the cell surface. This Arabidopsis thaliana (Mouse-ear cress) protein is Protein COBRA (COB).